A 684-amino-acid polypeptide reads, in one-letter code: TBC1 domain family member 23 (684 aa).

In terms of domain architecture, Rab-GAP TBC spans 44–225 (PLPAELRAKV…AIWDGYLQQA (182 aa)). S300 is modified (phosphoserine). The Rhodanese domain maps to 334 to 446 (EGVRFFVVDC…LQQHLADINV (113 aa)). A phosphoserine mark is found at S469, S474, and S507. Phosphothreonine is present on T514. The may mediate the interaction with C17orf75, FAM91A1 and WDR11 stretch occupies residues 514-558 (TPVDRHVSSSDRVGKPYRGVKPVFSIGDEEEYDTDEIDSSSMSDD). Positions 514–684 (TPVDRHVSSS…IMKVLDALES (171 aa)) are may mediate the interaction with WASHC1. S556 carries the post-translational modification Phosphoserine. The interval 559–684 (DRKEVVNIQT…IMKVLDALES (126 aa)) is may mediate the interaction with FKBP15 and WASHC2; required for endosome to Golgi trafficking.

In terms of assembly, directly interacts with GOLGA1 and GOLGA4. Interacts with FAM91A1, C17ORF75 and WDR11; the interaction recruits TBC1D23 to AP-1-derived vesicles. Directly interacts with WASHC1 and WASHC2/FAM21. Interacts with FKBP15.

It localises to the golgi apparatus. Its subcellular location is the trans-Golgi network. It is found in the cytoplasmic vesicle. Putative Rab GTPase-activating protein which plays a role in vesicular trafficking. Involved in endosome-to-Golgi trafficking. Acts as a bridging protein by binding simultaneously to golgins, including GOLGA1 and GOLGA4, located at the trans-Golgi, and to the WASH complex, located on endosome-derived vesicles. Together with WDR11 complex facilitates the golgin-mediated capture of vesicles generated using AP-1. Plays a role in brain development, including in cortical neuron positioning. May also be important for neurite outgrowth, possibly through its involvement in membrane trafficking and cargo delivery, 2 processes which are essential for axonal and dendritic growth. May act as a general inhibitor of innate immunity signaling, strongly inhibiting multiple TLR and dectin/CLEC7A-signaling pathways. Does not alter initial activation events, but instead affects maintenance of inflammatory gene expression several hours after bacterial lipopolysaccharide (LPS) challenge. The protein is TBC1 domain family member 23 (Tbc1d23) of Mus musculus (Mouse).